Reading from the N-terminus, the 375-residue chain is Histidine biosynthesis bifunctional protein HisB (375 aa).

Residues 1–168 (MTPILFVDRD…GIAHELADAP (168 aa)) form a histidinol-phosphatase region. The active-site Nucleophile is D8. Residues D8, D10, and D128 each coordinate Mg(2+). The Proton donor role is filled by D10. An imidazoleglycerol-phosphate dehydratase region spans residues 169-375 (RRAVVQRNTK…TALPSTKGAL (207 aa)).

The protein in the N-terminal section; belongs to the histidinol-phosphatase family. In the C-terminal section; belongs to the imidazoleglycerol-phosphate dehydratase family. The cofactor is Mg(2+).

Its subcellular location is the cytoplasm. The enzyme catalyses D-erythro-1-(imidazol-4-yl)glycerol 3-phosphate = 3-(imidazol-4-yl)-2-oxopropyl phosphate + H2O. It carries out the reaction L-histidinol phosphate + H2O = L-histidinol + phosphate. Its pathway is amino-acid biosynthesis; L-histidine biosynthesis; L-histidine from 5-phospho-alpha-D-ribose 1-diphosphate: step 6/9. It functions in the pathway amino-acid biosynthesis; L-histidine biosynthesis; L-histidine from 5-phospho-alpha-D-ribose 1-diphosphate: step 8/9. The protein is Histidine biosynthesis bifunctional protein HisB of Xanthomonas campestris pv. campestris (strain 8004).